A 509-amino-acid chain; its full sequence is MIISRGSHVDEEPVAKKPRISVGEMTDDTTDDGLNTEEIRAPYTTEEMDEPEKAALLPKIPKKSPVSIGMNPENGKYVLPNYSKDESLNARKFLKYYGLRKFLDTYLPEELNSLYIYSLIKLLGFEIRDKELLSSLYRFFHPVKSSDQFKLEYEDFTDPLEKKEAVKLIKDLQKAINRVLATRIRLSNFYTIDHFVSKIKKAERILVLTGAGVSTSLGIPDFRSSEGFYSKIQHLGLDDPQDVFNYDIFMQDPSVFYNIAHMILPPENMYSPLHSFIKMLQDKGKLLRNYTQNIDNLESYAGIDPEKLVQCHGSFATASCVTCHWQIPGEKIFSNIRSMELPLCPYCYQKRREYFPNTGDEEYDTLKGNLESGIQNNNFALKSYGVLKPDITFFGEALPSKFHKTIREDIMKCDLLICIGTSLKVAPVSEIVNMIPAYVPQVLINKDPVKHAEFDIELLGFCDDVATVVAQKCEWDIPHKDWEGKLKKKRFDVNEIERGVFNIEAGSPE.

The segment at 1–35 (MIISRGSHVDEEPVAKKPRISVGEMTDDTTDDGLN) is disordered. Residues 25–35 (MTDDTTDDGLN) show a composition bias toward acidic residues. A Deacetylase sirtuin-type domain is found at 185 to 476 (RLSNFYTIDH…TVVAQKCEWD (292 aa)). NAD(+) is bound by residues 210-229 (GAGV…EGFY) and 292-295 (QNID). The active-site Proton acceptor is the His312. The Zn(2+) site is built by Cys320, Cys323, Cys344, and Cys347. Residues 420-422 (GTS), 445-447 (NKD), and Cys462 contribute to the NAD(+) site.

Belongs to the sirtuin family. Class I subfamily. Zn(2+) serves as cofactor.

It is found in the nucleus. The enzyme catalyses N(6)-acetyl-L-lysyl-[protein] + NAD(+) + H2O = 2''-O-acetyl-ADP-D-ribose + nicotinamide + L-lysyl-[protein]. Its function is as follows. NAD-dependent deacetylase. Heterochromatin component that silences transcription at silent mating loci, telomeres and the ribosomal DNA, and that also suppresses recombination in the rDNA and extends replicative life span. It acts as a NAD-dependent histone deacetylase, which deacetylates 'Lys-9' and 'Lys-14' of Histone H3 and 'Lys-16' of Histone H4. This chain is NAD-dependent histone deacetylase SIR2 (SIR2), found in Candida glabrata (strain ATCC 2001 / BCRC 20586 / JCM 3761 / NBRC 0622 / NRRL Y-65 / CBS 138) (Yeast).